The sequence spans 287 residues: Pantothenate synthetase (287 aa).

30 to 37 (MGNLHSGH) provides a ligand contact to ATP. His37 serves as the catalytic Proton donor. Gln61 is a binding site for (R)-pantoate. Gln61 serves as a coordination point for beta-alanine. 149-152 (GEKD) provides a ligand contact to ATP. Position 155 (Gln155) interacts with (R)-pantoate. Residues Val178 and 186–189 (LSSR) each bind ATP.

It belongs to the pantothenate synthetase family. Homodimer.

Its subcellular location is the cytoplasm. It carries out the reaction (R)-pantoate + beta-alanine + ATP = (R)-pantothenate + AMP + diphosphate + H(+). It participates in cofactor biosynthesis; (R)-pantothenate biosynthesis; (R)-pantothenate from (R)-pantoate and beta-alanine: step 1/1. In terms of biological role, catalyzes the condensation of pantoate with beta-alanine in an ATP-dependent reaction via a pantoyl-adenylate intermediate. This is Pantothenate synthetase from Pseudomonas entomophila (strain L48).